Consider the following 163-residue polypeptide: Disulfide bond formation protein B (163 aa).

Over 1-9 (MRLASPRSL) the chain is Cytoplasmic. Residues 10–26 (FVIAFLGSALLIAIALY) traverse the membrane as a helical segment. Over 27–44 (MEHVMGLAPCPLCIVQRI) the chain is Periplasmic. A disulfide bridge links Cys-36 with Cys-39. The chain crosses the membrane as a helical span at residues 45 to 61 (CVIGFGLVCLVAAIHGP). Residues 62–67 (AKVGRR) are Cytoplasmic-facing. A helical transmembrane segment spans residues 68 to 85 (VYAAIAALFVAAGAATAI). At 86-142 (RQIWLQSVPADQLPSCLPSLEYMMEALPFQEIARLVLHGTAECAEVSWTMLGMSIPE) the chain is on the periplasmic side. Cys-101 and Cys-128 are disulfide-bonded. A helical transmembrane segment spans residues 143-161 (WSLLGFIGMAIVCLWQLLR). At 162 to 163 (RD) the chain is on the cytoplasmic side.

It belongs to the DsbB family.

The protein localises to the cell inner membrane. Required for disulfide bond formation in some periplasmic proteins. Acts by oxidizing the DsbA protein. The protein is Disulfide bond formation protein B of Stutzerimonas stutzeri (strain A1501) (Pseudomonas stutzeri).